A 255-amino-acid chain; its full sequence is Taurine import ATP-binding protein TauB (255 aa).

Residues L2–S229 enclose the ABC transporter domain. G34–T41 lines the ATP pocket.

This sequence belongs to the ABC transporter superfamily. Taurine importer (TC 3.A.1.17.1) family. In terms of assembly, the complex is composed of two ATP-binding proteins (TauB), two transmembrane proteins (TauC) and a solute-binding protein (TauA).

It is found in the cell inner membrane. It carries out the reaction taurine(out) + ATP + H2O = taurine(in) + ADP + phosphate + H(+). Its function is as follows. Part of the ABC transporter complex TauABC involved in taurine import. Responsible for energy coupling to the transport system. The sequence is that of Taurine import ATP-binding protein TauB from Escherichia coli O157:H7.